The following is a 358-amino-acid chain: Peptide chain release factor 1 (358 aa).

Residue glutamine 233 is modified to N5-methylglutamine.

It belongs to the prokaryotic/mitochondrial release factor family. Methylated by PrmC. Methylation increases the termination efficiency of RF1.

It localises to the cytoplasm. Peptide chain release factor 1 directs the termination of translation in response to the peptide chain termination codons UAG and UAA. The protein is Peptide chain release factor 1 of Brevibacillus brevis (strain 47 / JCM 6285 / NBRC 100599).